The chain runs to 1109 residues: MPRRTDLTSVLVIGSGPIVIGQAAEFDYSGTQACRVLREEGLRVILVNSNPATIMTDPEFADATYVEPITPEVVASIIAKERPDALLPTLGGQTALNTAIALHEAGVLAEYDVELIGANIEAIHLAEDRDQFKGVVERCGAESARSHIAHTIEEVLEAARDLGYPLVVRPSFTMGGLGSGIAYDEADLRRIAGAGLHYSPTTEVLLEESILGWKEYELELMRDRNDNVVVVCSIENVDPVGVHTGDSITVAPALTLTDREYQRLRDVGIAVIREVGVDTGGCNIQFAVHPDTGRVVVIEMNPRVSRSSALASKATGFPIAKIAARLAVGYTLDEIPNDITGSTPASFEPTLDYVVVKVPRFAFEKFPAADPLLTTTMKSVGEAMALGRNFTEALQKAMRSIDKAGSTFHWRGQAPDPERTAALVDAARTPTEGRLVQVQQAIRGGATLEELFEATAIDPWFLDQLFLLEEVAGRLAAVDALDAGVLALAKRHGFSDAQVAEIRDLGEATVREIRHAYGLRPVYKTVDTCAAEFEARTPYHYSSYDAETEVQPRDRPAVLILGSGPNRIGQGIEFDYSCVHAALALKGEYETVMVNCNPETVSTDYDTADRLYFEPLTFEDVLEVYHAELAVGPVAGIIVQLGGQTPLSLATRLADAGLPIWGTPPEAIDAAEDRGVFGEVLVAAGLPAPAFGTATSLAQARAVADRIGYPVLVRPSYVLGGRGMEIVYDVEQLTDYVRRATPTDGPADAPVFASPVLIDRFLDEAIEIDVDALYDGHELFLGGVMEHIEEAGIHSGDSACVLPPVTLSRREIERIRTSTEAIARGVGVRGLLNVQFALSSDVLYVLEANPRASRTVPFVAKATGVPLAKAASLLMAGATIADLRASGHLPAVDGTYAHPSSPVAVKEAVLPFKRFRTRAGTVVDTVLGPEMRSTGEVMGYDVDVPAAFAKSQAAAYGGLPTSGRVFVSVADRDKRSIVFPVARLVELGFEILATTGTADVLRRYGIDSRVVRKASDGRGPDGELTVVDLITAGEIDMVVNTPNGQGARADGYDIRTATTAADKPIVTTTQQFAAAVLGIEAIRRGPFAVASLQEHDAARAARETEGVHA.

Residues 1–402 (MPRRTDLTSV…ALQKAMRSID (402 aa)) form a carboxyphosphate synthetic domain region. 12 residues coordinate ATP: Arg-129, Arg-169, Gly-175, Gly-176, Glu-208, Ile-210, Glu-215, Gly-241, Val-242, His-243, Gln-285, and Glu-299. The ATP-grasp 1 domain occupies 133–328 (KGVVERCGAE…IAKIAARLAV (196 aa)). Residues Gln-285, Glu-299, and Asn-301 each contribute to the Mg(2+) site. Residues Gln-285, Glu-299, and Asn-301 each contribute to the Mn(2+) site. The interval 403-548 (KAGSTFHWRG…YHYSSYDAET (146 aa)) is oligomerization domain. Residues 549-956 (EVQPRDRPAV…AFAKSQAAAY (408 aa)) are carbamoyl phosphate synthetic domain. The ATP-grasp 2 domain occupies 678–876 (GEVLVAAGLP…LAKAASLLMA (199 aa)). Positions 714, 760, 762, 767, 792, 793, 794, 795, 835, and 847 each coordinate ATP. Mg(2+)-binding residues include Gln-835, Glu-847, and Asn-849. Residues Gln-835, Glu-847, and Asn-849 each coordinate Mn(2+). The 146-residue stretch at 957 to 1102 (GGLPTSGRVF…QEHDAARAAR (146 aa)) folds into the MGS-like domain. Residues 957-1109 (GGLPTSGRVF…AARETEGVHA (153 aa)) are allosteric domain.

This sequence belongs to the CarB family. Composed of two chains; the small (or glutamine) chain promotes the hydrolysis of glutamine to ammonia, which is used by the large (or ammonia) chain to synthesize carbamoyl phosphate. Tetramer of heterodimers (alpha,beta)4. Requires Mg(2+) as cofactor. Mn(2+) is required as a cofactor.

It catalyses the reaction hydrogencarbonate + L-glutamine + 2 ATP + H2O = carbamoyl phosphate + L-glutamate + 2 ADP + phosphate + 2 H(+). The enzyme catalyses hydrogencarbonate + NH4(+) + 2 ATP = carbamoyl phosphate + 2 ADP + phosphate + 2 H(+). It participates in amino-acid biosynthesis; L-arginine biosynthesis; carbamoyl phosphate from bicarbonate: step 1/1. The protein operates within pyrimidine metabolism; UMP biosynthesis via de novo pathway; (S)-dihydroorotate from bicarbonate: step 1/3. Its function is as follows. Large subunit of the glutamine-dependent carbamoyl phosphate synthetase (CPSase). CPSase catalyzes the formation of carbamoyl phosphate from the ammonia moiety of glutamine, carbonate, and phosphate donated by ATP, constituting the first step of 2 biosynthetic pathways, one leading to arginine and/or urea and the other to pyrimidine nucleotides. The large subunit (synthetase) binds the substrates ammonia (free or transferred from glutamine from the small subunit), hydrogencarbonate and ATP and carries out an ATP-coupled ligase reaction, activating hydrogencarbonate by forming carboxy phosphate which reacts with ammonia to form carbamoyl phosphate. The polypeptide is Carbamoyl phosphate synthase large chain (Beutenbergia cavernae (strain ATCC BAA-8 / DSM 12333 / CCUG 43141 / JCM 11478 / NBRC 16432 / NCIMB 13614 / HKI 0122)).